We begin with the raw amino-acid sequence, 171 residues long: Crossover junction endodeoxyribonuclease RuvC (171 aa).

Catalysis depends on residues aspartate 11, glutamate 71, and aspartate 143. The Mg(2+) site is built by aspartate 11, glutamate 71, and aspartate 143.

The protein belongs to the RuvC family. As to quaternary structure, homodimer which binds Holliday junction (HJ) DNA. The HJ becomes 2-fold symmetrical on binding to RuvC with unstacked arms; it has a different conformation from HJ DNA in complex with RuvA. In the full resolvosome a probable DNA-RuvA(4)-RuvB(12)-RuvC(2) complex forms which resolves the HJ. The cofactor is Mg(2+).

It is found in the cytoplasm. The enzyme catalyses Endonucleolytic cleavage at a junction such as a reciprocal single-stranded crossover between two homologous DNA duplexes (Holliday junction).. Functionally, the RuvA-RuvB-RuvC complex processes Holliday junction (HJ) DNA during genetic recombination and DNA repair. Endonuclease that resolves HJ intermediates. Cleaves cruciform DNA by making single-stranded nicks across the HJ at symmetrical positions within the homologous arms, yielding a 5'-phosphate and a 3'-hydroxyl group; requires a central core of homology in the junction. The consensus cleavage sequence is 5'-(A/T)TT(C/G)-3'. Cleavage occurs on the 3'-side of the TT dinucleotide at the point of strand exchange. HJ branch migration catalyzed by RuvA-RuvB allows RuvC to scan DNA until it finds its consensus sequence, where it cleaves and resolves the cruciform DNA. The polypeptide is Crossover junction endodeoxyribonuclease RuvC (Chelativorans sp. (strain BNC1)).